We begin with the raw amino-acid sequence, 62 residues long: Neurotoxin 3 (62 aa).

Polar residues predominate over residues Leu-1–Gly-16. Residues Leu-1 to Thr-22 form a disordered region. Intrachain disulfides connect Cys-3–Cys-24, Cys-17–Cys-41, Cys-43–Cys-54, and Cys-55–Cys-60.

Belongs to the three-finger toxin family. Short-chain subfamily. Type I alpha-neurotoxin sub-subfamily. In terms of tissue distribution, expressed by the venom gland.

The protein resides in the secreted. In terms of biological role, binds to muscle nicotinic acetylcholine receptor (nAChR) and inhibit acetylcholine from binding to the receptor, thereby impairing neuromuscular transmission. This is Neurotoxin 3 from Naja sputatrix (Malayan spitting cobra).